A 349-amino-acid chain; its full sequence is Holliday junction branch migration complex subunit RuvB (349 aa).

Residues 1–181 (MDDRILTSVN…FGVLCPMEFY (181 aa)) form a large ATPase domain (RuvB-L) region. ATP contacts are provided by residues leucine 20, arginine 21, glycine 62, lysine 65, threonine 66, threonine 67, 128–130 (EDY), arginine 171, tyrosine 181, and arginine 218. Residue threonine 66 coordinates Mg(2+). Positions 182-252 (NDEELKEIIV…SAKKALNLLE (71 aa)) are small ATPAse domain (RuvB-S). Positions 255-349 (DEGFDSIDNK…DQCSFFKKEK (95 aa)) are head domain (RuvB-H). DNA-binding residues include arginine 310 and arginine 315.

The protein belongs to the RuvB family. In terms of assembly, homohexamer. Forms an RuvA(8)-RuvB(12)-Holliday junction (HJ) complex. HJ DNA is sandwiched between 2 RuvA tetramers; dsDNA enters through RuvA and exits via RuvB. An RuvB hexamer assembles on each DNA strand where it exits the tetramer. Each RuvB hexamer is contacted by two RuvA subunits (via domain III) on 2 adjacent RuvB subunits; this complex drives branch migration. In the full resolvosome a probable DNA-RuvA(4)-RuvB(12)-RuvC(2) complex forms which resolves the HJ.

It is found in the cytoplasm. It catalyses the reaction ATP + H2O = ADP + phosphate + H(+). In terms of biological role, the RuvA-RuvB-RuvC complex processes Holliday junction (HJ) DNA during genetic recombination and DNA repair, while the RuvA-RuvB complex plays an important role in the rescue of blocked DNA replication forks via replication fork reversal (RFR). RuvA specifically binds to HJ cruciform DNA, conferring on it an open structure. The RuvB hexamer acts as an ATP-dependent pump, pulling dsDNA into and through the RuvAB complex. RuvB forms 2 homohexamers on either side of HJ DNA bound by 1 or 2 RuvA tetramers; 4 subunits per hexamer contact DNA at a time. Coordinated motions by a converter formed by DNA-disengaged RuvB subunits stimulates ATP hydrolysis and nucleotide exchange. Immobilization of the converter enables RuvB to convert the ATP-contained energy into a lever motion, pulling 2 nucleotides of DNA out of the RuvA tetramer per ATP hydrolyzed, thus driving DNA branch migration. The RuvB motors rotate together with the DNA substrate, which together with the progressing nucleotide cycle form the mechanistic basis for DNA recombination by continuous HJ branch migration. Branch migration allows RuvC to scan DNA until it finds its consensus sequence, where it cleaves and resolves cruciform DNA. The protein is Holliday junction branch migration complex subunit RuvB of Clostridium acetobutylicum (strain ATCC 824 / DSM 792 / JCM 1419 / IAM 19013 / LMG 5710 / NBRC 13948 / NRRL B-527 / VKM B-1787 / 2291 / W).